A 155-amino-acid chain; its full sequence is Small ribosomal subunit protein uS7 (155 aa).

This sequence belongs to the universal ribosomal protein uS7 family. As to quaternary structure, part of the 30S ribosomal subunit. Contacts proteins S9 and S11.

In terms of biological role, one of the primary rRNA binding proteins, it binds directly to 16S rRNA where it nucleates assembly of the head domain of the 30S subunit. Is located at the subunit interface close to the decoding center, probably blocks exit of the E-site tRNA. In Thermosipho africanus (strain TCF52B), this protein is Small ribosomal subunit protein uS7.